Reading from the N-terminus, the 238-residue chain is Polynucleotide 3'-phosphatase (238 aa).

It belongs to the DNA 3' phosphatase family.

The protein resides in the nucleus. It carries out the reaction a 3'end (2'-deoxyribonucleotide 3'-phosphate)-DNA + H2O = a 3'-end 2'-deoxyribonucleotide-DNA + phosphate. Dephosphorylate DNA's 3'-phosphate termini. Has a role in the repair of breaks in single-stranded DNA. The protein is Polynucleotide 3'-phosphatase (TPP1) of Saccharomyces cerevisiae (strain ATCC 204508 / S288c) (Baker's yeast).